The following is a 60-amino-acid chain: Large ribosomal subunit protein bL33 (60 aa).

Belongs to the bacterial ribosomal protein bL33 family.

The sequence is that of Large ribosomal subunit protein bL33 from Chlorobium phaeovibrioides (strain DSM 265 / 1930) (Prosthecochloris vibrioformis (strain DSM 265)).